The primary structure comprises 717 residues: Radial spoke head protein 6 homolog A (717 aa).

4 disordered regions span residues 1–65, 503–523, 563–588, and 672–717; these read MGDL…SLSQ, SEEE…YEEN, TEEE…QEVG, and GPEI…ETDD. Composition is skewed to acidic residues over residues 503–513, 564–585, and 700–717; these read SEEEGDEEEEG, EEEE…EVEQ, and TEEE…ETDD.

The protein belongs to the flagellar radial spoke RSP4/6 family. In terms of assembly, component of the axonemal radial spoke 1 (RS1) and 2 (RS2) complexes, at least composed of spoke head proteins RSPH1, RSPH3, RSPH9 and the cilia-specific component RSPH4A or sperm-specific component RSPH6A, spoke stalk proteins RSPH14, DNAJB13, DYDC1, ROPN1L and NME5, and the RS1 complex-specific anchor protein IQUB. Interacts with RSPH1. Interacts with RSPH3B. Interacts with RSPH4A. Interacts with RSPH9. Interacts with RSPH10B. Post-translationally, phosphorylated by PKA. Phosphorylation increases in capacitated sperm.

Its subcellular location is the cytoplasm. It is found in the cytoskeleton. The protein resides in the flagellum axoneme. Functions as part of radial spoke complexes in the axoneme of sperm flagella that play an important part in motility. The triple radial spokes (RS1, RS2 and RS3) are required to modulate beating of the sperm flagellum. The sequence is that of Radial spoke head protein 6 homolog A from Homo sapiens (Human).